The following is a 510-amino-acid chain: Gelatinase (510 aa).

The N-terminal stretch at 1 to 30 (MMKGNKILYILGTGIFVGSSCLFSSLFVAA) is a signal peptide. Positions 31 to 192 (EEQVYSESEV…IMEKQDLTEH (162 aa)) are excised as a propeptide. Asp324 is a Ca(2+) binding site. His328 serves as a coordination point for Zn(2+). The active site involves Glu329. Positions 332 and 352 each coordinate Zn(2+). Ser376 lines the Ca(2+) pocket. His419 serves as the catalytic Proton donor.

It belongs to the peptidase M4 family.

Its subcellular location is the secreted. It carries out the reaction Preferential cleavage: Xaa-|-Leu, Xaa-|-Phe, Xaa-|-Tyr, Xaa-|-Ala.. Inhibited by L-leucine hydroxamate and phosphoramidon. Not inhibited by phenylmethanesulfonyl fluoride. Reversibly inactivated by straight-chain aliphatic alcohols. Functionally, metalloprotease capable of the hydrolysis of insoluble hydrophobic substrates. Hydrolyzes azocoll and gelatin and, at a lower rate, soluble and insoluble collagens. Does not cleave short synthetic peptides. Preferentially hydrolyzes the 24-Phe-|-Phe-25 bond in the insulin B-chain, followed by the 5-His-|-Leu-6 bond. Inactivates endothelin-1, primarily by cleavage of the 5-Ser-|-Leu-6 and 16-His-|-Leu-17 bonds. Hydrolyzes the alpha chain of C3 to generate a C3b-like protein. Inhibits complement-mediated hemolysis and opsinization of bacteria. Hydrolyzes the insect antimicrobial peptide cecropin. Decreases the length of E.faecalis chains via the activation of autolysin. Degrades polymerized fibrin. The sequence is that of Gelatinase from Enterococcus faecalis (strain ATCC 700802 / V583).